We begin with the raw amino-acid sequence, 388 residues long: tRNA(Ile)-lysidine synthase (388 aa).

Residue 51 to 56 (SGGRDS) coordinates ATP.

The protein belongs to the tRNA(Ile)-lysidine synthase family.

It is found in the cytoplasm. The enzyme catalyses cytidine(34) in tRNA(Ile2) + L-lysine + ATP = lysidine(34) in tRNA(Ile2) + AMP + diphosphate + H(+). Ligates lysine onto the cytidine present at position 34 of the AUA codon-specific tRNA(Ile) that contains the anticodon CAU, in an ATP-dependent manner. Cytidine is converted to lysidine, thus changing the amino acid specificity of the tRNA from methionine to isoleucine. The protein is tRNA(Ile)-lysidine synthase of Bifidobacterium longum (strain DJO10A).